A 386-amino-acid polypeptide reads, in one-letter code: Patatin-B1 (386 aa).

Residues 1-23 form the signal peptide; that stretch reads MATTKSFLILFFMILATTSSTCA. A PNPLA domain is found at 32 to 229; that stretch reads LSIDGGGIKG…TVGDPALLSL (198 aa). A GXGXXG motif is present at residues 36–41; sequence GGGIKG. The short motif at 75 to 79 is the GXSXG element; sequence GTSTG. S77 (nucleophile) is an active-site residue. N115 carries N-linked (GlcNAc...) asparagine glycosylation. The Proton acceptor role is filled by D215. Residues 215–217 carry the DGA/G motif; that stretch reads DGG.

The protein belongs to the patatin family.

The protein localises to the vacuole. Probable lipolytic acyl hydrolase (LAH), an activity which is thought to be involved in the response of tubers to pathogens. This is Patatin-B1 (PATB1) from Solanum tuberosum (Potato).